The sequence spans 70 residues: Plasticin-S1 (70 aa).

The signal sequence occupies residues 1–22; sequence MAFLKKSLFLVLFLALVPLSIC. The propeptide occupies 23 to 45; sequence EEEKREGENEKEQEDDNQSEEKR. Positions 25–45 are disordered; that stretch reads EKREGENEKEQEDDNQSEEKR.

Belongs to the frog skin active peptide (FSAP) family. Plasticin subfamily. In terms of tissue distribution, expressed by the skin glands.

It is found in the secreted. Its function is as follows. The native peptide is a cationic amphipathic alpha-helical antimicrobial peptide with potent activity against both Gram-positive and Gram-negative bacteria. It has weak activity against fungi and shows low hemolytic activity. The sequence is that of Plasticin-S1 from Phyllomedusa sauvagei (Sauvage's leaf frog).